We begin with the raw amino-acid sequence, 341 residues long: Retinol dehydrogenase 10 (341 aa).

Residues 3 to 23 traverse the membrane as a helical; Signal-anchor segment; sequence IVVEFFVVTFKVLWAFVLAAA. 40-64 contributes to the NADP(+) binding site; sequence LITGAGSGLGRLFALEFARRRALLV. A substrate-binding site is contributed by S197. The active-site Proton acceptor is the Y210.

This sequence belongs to the short-chain dehydrogenases/reductases (SDR) family. In terms of tissue distribution, detected in retinal pigment epithelium (at protein level). Detected in retina, retinal pigment epithelium, and at lower levels in cornea, liver, kidney, pancreas, lung, brain and skeletal muscle.

The protein resides in the microsome membrane. It localises to the endoplasmic reticulum membrane. The catalysed reaction is all-trans-retinol + NADP(+) = all-trans-retinal + NADPH + H(+). The protein operates within cofactor metabolism; retinol metabolism. Retinol dehydrogenase with a clear preference for NADP. Converts all-trans-retinol to all-trans-retinal. Has no detectable activity towards 11-cis-retinol, 9-cis-retinol and 13-cis-retinol. The sequence is that of Retinol dehydrogenase 10 (RDH10) from Bos taurus (Bovine).